We begin with the raw amino-acid sequence, 169 residues long: Transcription antitermination protein NusB (169 aa).

The protein belongs to the NusB family.

Involved in transcription antitermination. Required for transcription of ribosomal RNA (rRNA) genes. Binds specifically to the boxA antiterminator sequence of the ribosomal RNA (rrn) operons. The sequence is that of Transcription antitermination protein NusB from Rhodococcus opacus (strain B4).